Here is a 736-residue protein sequence, read N- to C-terminus: Polyribonucleotide nucleotidyltransferase (736 aa).

The Mg(2+) site is built by Asp-493 and Asp-499. The 60-residue stretch at Pro-560–Ile-619 folds into the KH domain. In terms of domain architecture, S1 motif spans Gly-629–Glu-703. The interval Glu-710–Thr-736 is disordered. The segment covering Arg-720–Thr-736 has biased composition (basic and acidic residues).

Belongs to the polyribonucleotide nucleotidyltransferase family. Mg(2+) serves as cofactor.

It is found in the cytoplasm. The enzyme catalyses RNA(n+1) + phosphate = RNA(n) + a ribonucleoside 5'-diphosphate. Its function is as follows. Involved in mRNA degradation. Catalyzes the phosphorolysis of single-stranded polyribonucleotides processively in the 3'- to 5'-direction. This is Polyribonucleotide nucleotidyltransferase from Lawsonia intracellularis (strain PHE/MN1-00).